We begin with the raw amino-acid sequence, 1347 residues long: BTB/POZ domain-containing protein 1 (1347 aa).

2 ANK repeats span residues 51-81 (YGRT…DVFV) and 86-115 (SGYT…SFRS). RCC1 repeat units lie at residues 148 to 198 (GNEL…DKIL), 215 to 264 (SQNV…ALTK), 265 to 322 (FGSI…AWTD), and 324 to 372 (DIYS…CLLQ). BTB domains lie at 619–698 (SDVT…LSPW) and 758–829 (MDTV…VELF). Disordered stretches follow at residues 1006–1029 (SSNQ…NVVN), 1104–1139 (EKAD…SKQV), 1193–1237 (EGSS…PLSI), and 1286–1347 (GILK…RAVK). The span at 1013–1023 (LNKEDAEEKSP) shows a compositional bias: basic and acidic residues. 2 stretches are compositionally biased toward polar residues: residues 1208–1237 (SNGS…PLSI) and 1297–1306 (NRKQGQASKQ). The segment covering 1336 to 1347 (TTHKKGKARAVK) has biased composition (basic residues).

As to quaternary structure, interacts with cul3.

Its pathway is protein modification; protein ubiquitination. In terms of biological role, probable substrate-specific adapter of an E3 ubiquitin-protein ligase complex which mediates the ubiquitination and subsequent proteasomal degradation of target proteins. The protein is BTB/POZ domain-containing protein 1 (btb1) of Schizosaccharomyces pombe (strain 972 / ATCC 24843) (Fission yeast).